The primary structure comprises 976 residues: Leucine--tRNA ligase (976 aa).

Residues 63-74 (PYPSGVGLHVGH) carry the 'HIGH' region motif. Positions 745–749 (KMGKS) match the 'KMSKS' region motif. Residue lysine 748 participates in ATP binding.

The protein belongs to the class-I aminoacyl-tRNA synthetase family.

The protein localises to the cytoplasm. It catalyses the reaction tRNA(Leu) + L-leucine + ATP = L-leucyl-tRNA(Leu) + AMP + diphosphate. The chain is Leucine--tRNA ligase from Corynebacterium jeikeium (strain K411).